The following is a 188-amino-acid chain: UPF0301 protein MCA2336 2 (188 aa).

The protein belongs to the UPF0301 (AlgH) family.

In Methylococcus capsulatus (strain ATCC 33009 / NCIMB 11132 / Bath), this protein is UPF0301 protein MCA2336 2.